The chain runs to 272 residues: uncharacterized protein (272 aa).

6 helical membrane-spanning segments follow: residues 20 to 37 (VYLS…NLLI), 57 to 77 (HPLT…HFSL), 97 to 119 (LNVS…IMLM), 155 to 177 (SIAT…YVIF), 184 to 203 (LVSL…VTLG), and 234 to 256 (PYSI…WLVI).

The protein resides in the cell membrane. This is an uncharacterized protein from Halalkalibacterium halodurans (strain ATCC BAA-125 / DSM 18197 / FERM 7344 / JCM 9153 / C-125) (Bacillus halodurans).